The primary structure comprises 275 residues: Ribosomal RNA small subunit methyltransferase A (275 aa).

6 residues coordinate S-adenosyl-L-methionine: asparagine 21, leucine 23, glycine 48, glutamate 69, aspartate 94, and asparagine 115.

It belongs to the class I-like SAM-binding methyltransferase superfamily. rRNA adenine N(6)-methyltransferase family. RsmA subfamily.

Its subcellular location is the cytoplasm. It carries out the reaction adenosine(1518)/adenosine(1519) in 16S rRNA + 4 S-adenosyl-L-methionine = N(6)-dimethyladenosine(1518)/N(6)-dimethyladenosine(1519) in 16S rRNA + 4 S-adenosyl-L-homocysteine + 4 H(+). Its function is as follows. Specifically dimethylates two adjacent adenosines (A1518 and A1519) in the loop of a conserved hairpin near the 3'-end of 16S rRNA in the 30S particle. May play a critical role in biogenesis of 30S subunits. The chain is Ribosomal RNA small subunit methyltransferase A from Clostridium botulinum (strain Kyoto / Type A2).